The primary structure comprises 898 residues: Chitin synthase 1 (898 aa).

Residues 1 to 154 form a disordered region; the sequence is MDPRYGAQPM…PPQQGGGIQR (154 aa). A compositionally biased stretch (pro residues) spans 9-21; the sequence is PMPPRRSPSPGHP. Composition is skewed to polar residues over residues 64–75 and 136–146; these read DHLSLNAAQSVD and DVPSEQYQDPP. 5 helical membrane passes run 441 to 461, 540 to 560, 570 to 590, 616 to 636, and 651 to 671; these read SAFGFISVLPGAFSAYRYVAL, RWLNGSFFAAIYAIVHFLDFL, FAFFIEFIFNTINMIFAWFAI, ILGVVFTWLYGVFLITCFVLS, and MCWFWAIIMIYLMFAAVFISV. N685 carries an N-linked (GlcNAc...) asparagine glycan. 4 consecutive transmembrane segments (helical) span residues 697 to 717, 726 to 746, 825 to 845, and 870 to 890; these read MLIISLMSTYGIWLIASLIML, FAQYMLLTPTFTNVLNVYAFC, GVVLLWMVTNFGLAAIVLSSA, and IVLWSVAGLSAFKFIGAMWFL.

The protein belongs to the chitin synthase family. Class I subfamily.

Its subcellular location is the cell membrane. The enzyme catalyses [(1-&gt;4)-N-acetyl-beta-D-glucosaminyl](n) + UDP-N-acetyl-alpha-D-glucosamine = [(1-&gt;4)-N-acetyl-beta-D-glucosaminyl](n+1) + UDP + H(+). Its function is as follows. Polymerizes chitin, a structural polymer of the cell wall and septum, by transferring the sugar moiety of UDP-GlcNAc to the non-reducing end of the growing chitin polymer. Shows additive effects in septum formation with CHS2, CHS3A, CHS4, CHS5, CHS6 and CHS7. Regulates mycelial growth and conidiation. Involved in virulence and mediates mycotoxin deoxinivalenol (DON) biosynthesis via the regulation of the expression of TRI4, TRI5 and TRI6. The protein is Chitin synthase 1 of Gibberella zeae (strain ATCC MYA-4620 / CBS 123657 / FGSC 9075 / NRRL 31084 / PH-1) (Wheat head blight fungus).